We begin with the raw amino-acid sequence, 172 residues long: Probable metallophosphoesterase MTH_1774 (172 aa).

Asp-8, His-10, Asp-37, Asn-59, His-85, His-113, and His-115 together coordinate a divalent metal cation.

This sequence belongs to the metallophosphoesterase superfamily. YfcE family. A divalent metal cation serves as cofactor.

The sequence is that of Probable metallophosphoesterase MTH_1774 from Methanothermobacter thermautotrophicus (strain ATCC 29096 / DSM 1053 / JCM 10044 / NBRC 100330 / Delta H) (Methanobacterium thermoautotrophicum).